Here is a 317-residue protein sequence, read N- to C-terminus: Melanocyte-stimulating hormone receptor (317 aa).

Residues 1–37 are Extracellular-facing; that stretch reads MPVQGSQRRLLGSLNSTPTATPHLGLAANQTGARCLE. Asn-29 is a glycosylation site (N-linked (GlcNAc...) asparagine). The chain crosses the membrane as a helical span at residues 38-63; that stretch reads MSIPDGLFLSLGLVSLVENVLVVTAI. Residues 64–72 are Cytoplasmic-facing; that stretch reads AKNRNLHSP. A helical transmembrane segment spans residues 73–93; the sequence is MYCFICCLALSDLLVSGSNML. At 94-118 the chain is on the extracellular side; it reads ETAVTLLLEAGALAARAAVVQQLDN. Residues 119 to 140 form a helical membrane-spanning segment; that stretch reads VIDVITCSSMLSSLCFLGAIAV. At 141–163 the chain is on the cytoplasmic side; that stretch reads DRYISIFYALRYHSIVTLPRARR. A helical membrane pass occupies residues 164-183; the sequence is AIAAIWVASVLCSTLFIAYY. The Extracellular portion of the chain corresponds to 184 to 191; the sequence is DHAAVLLC. The helical transmembrane segment at 192–211 threads the bilayer; sequence LVVFFLAMLVLMAVLYVHML. Residues 212 to 240 are Cytoplasmic-facing; the sequence is ARACQHAQGIARLHKRQRLAHQGFGLKGA. Residues 241 to 266 form a helical membrane-spanning segment; the sequence is ATLTILLGIFFLCWGPFFLHLTLIVL. The Extracellular segment spans residues 267–279; the sequence is CPQHPTCSCIFKN. The helical transmembrane segment at 280–300 threads the bilayer; it reads FNLFLTLIICNAIIDPLIYAF. The Cytoplasmic segment spans residues 301-317; sequence RSQELRRTLKEVLLCSW. Cys-315 is lipidated: S-palmitoyl cysteine.

Belongs to the G-protein coupled receptor 1 family. As to quaternary structure, interacts with MGRN1, but does not undergo MGRN1-mediated ubiquitination; this interaction competes with GNAS-binding and thus inhibits agonist-induced cAMP production. Interacts with OPN3; the interaction results in a decrease in MC1R-mediated cAMP signaling and ultimately a decrease in melanin production in melanocytes.

The protein resides in the cell membrane. Its function is as follows. Receptor for MSH (alpha, beta and gamma) and ACTH. The activity of this receptor is mediated by G proteins which activate adenylate cyclase. Mediates melanogenesis, the production of eumelanin (black/brown) and phaeomelanin (red/yellow), via regulation of cAMP signaling in melanocytes. The chain is Melanocyte-stimulating hormone receptor (MC1R) from Macaca nemestrina (Pig-tailed macaque).